The following is a 360-amino-acid chain: Phenylalanine--tRNA ligase alpha subunit (360 aa).

Glutamate 260 is a Mg(2+) binding site.

This sequence belongs to the class-II aminoacyl-tRNA synthetase family. Phe-tRNA synthetase alpha subunit type 1 subfamily. As to quaternary structure, tetramer of two alpha and two beta subunits. Requires Mg(2+) as cofactor.

The protein resides in the cytoplasm. The catalysed reaction is tRNA(Phe) + L-phenylalanine + ATP = L-phenylalanyl-tRNA(Phe) + AMP + diphosphate + H(+). The sequence is that of Phenylalanine--tRNA ligase alpha subunit from Sinorhizobium medicae (strain WSM419) (Ensifer medicae).